The chain runs to 506 residues: Glutamate--tRNA ligase (506 aa).

Positions P23–L33 match the 'HIGH' region motif. A 'KMSKS' region motif is present at residues K267–R271. ATP is bound at residue K270.

The protein belongs to the class-I aminoacyl-tRNA synthetase family. Glutamate--tRNA ligase type 1 subfamily. Monomer.

The protein localises to the cytoplasm. The enzyme catalyses tRNA(Glu) + L-glutamate + ATP = L-glutamyl-tRNA(Glu) + AMP + diphosphate. Catalyzes the attachment of glutamate to tRNA(Glu) in a two-step reaction: glutamate is first activated by ATP to form Glu-AMP and then transferred to the acceptor end of tRNA(Glu). This chain is Glutamate--tRNA ligase, found in Clavibacter michiganensis subsp. michiganensis (strain NCPPB 382).